A 121-amino-acid chain; its full sequence is MKKKYRIKKNEEFQEVFRRGVSTANRQFVVYTLDRPEQPYFRIGLSVSKKLGKAVVRNQIKRYVRQCFLELKEEVVPGKDYVIIARQPVAEMGYAEVKKSLLHVLRKAGGLKKRGRTTDLA.

Belongs to the RnpA family. Consists of a catalytic RNA component (M1 or rnpB) and a protein subunit.

It carries out the reaction Endonucleolytic cleavage of RNA, removing 5'-extranucleotides from tRNA precursor.. RNaseP catalyzes the removal of the 5'-leader sequence from pre-tRNA to produce the mature 5'-terminus. It can also cleave other RNA substrates such as 4.5S RNA. The protein component plays an auxiliary but essential role in vivo by binding to the 5'-leader sequence and broadening the substrate specificity of the ribozyme. This is Ribonuclease P protein component from Geobacillus thermodenitrificans (strain NG80-2).